We begin with the raw amino-acid sequence, 206 residues long: Oligoribonuclease (206 aa).

The Exonuclease domain maps to 20 to 183; that stretch reads LVWLDMEMTG…ADIHESIDEL (164 aa). The active site involves Tyr141.

This sequence belongs to the oligoribonuclease family.

Its subcellular location is the cytoplasm. Functionally, 3'-to-5' exoribonuclease specific for small oligoribonucleotides. This chain is Oligoribonuclease, found in Burkholderia lata (strain ATCC 17760 / DSM 23089 / LMG 22485 / NCIMB 9086 / R18194 / 383).